Here is a 710-residue protein sequence, read N- to C-terminus: MLFRSVMNKPRLGYGQKGAPFTYPLQSLLQCYQCVKQDEHISYGELGMPVPPFGCAFSTVPDMSHVLAVANEEGIVRLYDTECRDMQRLLMKEFMAHTNAVFDIAWVPGEHKLVTASGDQTAKLWDVMAGELIGECRGHQCSLKSVSFSKFERAVFSTGGRDGNIMMWDTRCSKKDGFYRQVNQITGAHNAIDKQTPSKMKKRKPSIRGLAPSVDSQQSVTVVIFQDEYTIISAGAVDGVVKIWDLRKNYSAYRQDPVPVKHFPYPGNSTRKLGYSSLVLDPTGTNLFASCTDDNVYMFNATGLKTDPVSIFRGHQNSTFYIKASVSPDGQFLLSGSSDHSAYIWQVSDPMAAPVTLMGHCQEVTSVAWCQSDFTKIATCSDDNTVRVWRLKRSCEDSSESDKRDSVGWACKKKFEPSSMAANLCTPGKPSVMSSSSLTSSPTPASCAPSNTGDLPMPSSTPISALLPDPKLQTPKRINNGGLGVSPKQMSSSKMSIKDWVTRTPKSSTRTDTKTPSPRKAFTPVEQYPSVSSARVQLPYEKRAKRRLETSSEYAEHVCPDNCNCVRELEPGLKKAKLDVCFIDKERDSSDDKCLRLSDLSKGFDQELSPSPSTSLHMNATENLLQLGPLSELKSVLLDKENSSPEKNWLSALGHKFKSSPQNKASGSPSSRTSTTKKQQPRNAPNSPVSVPTPPGSMRKICTYFFKKSE.

WD repeat units follow at residues 47–89 (GMPV…MQRL), 96–135 (AHTN…LIGE), and 138–178 (GHQC…KDGF). The short motif at 168–171 (WDTR) is the DDB1-binding motif element. The Nuclear localization signal motif lies at 197–204 (PSKMKKRK). 4 WD repeats span residues 215-254 (DSQQ…SAYR), 270-309 (TRKL…TDPV), 314-355 (GHQN…AAPV), and 359-398 (GHCQ…CEDS). Positions 244–247 (WDLR) match the DDB1-binding motif motif. 2 disordered regions span residues 428 to 534 (GKPS…VSSA) and 652 to 698 (ALGH…PGSM). Residues 430-450 (PSVMSSSSLTSSPTPASCAPS) are compositionally biased toward low complexity. 2 stretches are compositionally biased toward polar residues: residues 504 to 516 (TPKS…TKTP) and 659 to 690 (SSPQ…SPVS).

The protein belongs to the WD repeat cdt2 family. Component of the DCX(DTL) E3 ubiquitin ligase complex, at least composed of cul4 (cul4a or cul4b), ddb1, dtl/cdt2 and rbx1.

Its subcellular location is the nucleus. It localises to the cytoplasm. It is found in the cytoskeleton. The protein localises to the microtubule organizing center. The protein resides in the centrosome. Its subcellular location is the chromosome. The protein operates within protein modification; protein ubiquitination. Its function is as follows. Substrate-specific adapter of a DCX (DDB1-CUL4-X-box) E3 ubiquitin-protein ligase complex required for cell cycle control, DNA damage response and translesion DNA synthesis. The DCX(DTL) complex, also named CRL4(CDT2) complex, mediates the polyubiquitination and subsequent degradation of CDT1, CDKN1A/p21(CIP1), KMT5A and SDE2. CDT1 degradation in response to DNA damage is necessary to ensure proper cell cycle regulation of DNA replication. CDKN1A/p21(CIP1) degradation during S phase or following UV irradiation is essential to control replication licensing. KMT5A degradation is also important for a proper regulation of mechanisms such as TGF-beta signaling, cell cycle progression, DNA repair and cell migration. Most substrates require their interaction with PCNA for their polyubiquitination: substrates interact with PCNA via their PIP-box, and those containing the 'K+4' motif in the PIP box, recruit the DCX(DTL) complex, leading to their degradation. In undamaged proliferating cells, the DCX(DTL) complex also promotes the 'Lys-164' monoubiquitination of PCNA, thereby being involved in PCNA-dependent translesion DNA synthesis. May play a role in the regulation of the circadian clock. In Xenopus laevis (African clawed frog), this protein is Denticleless protein homolog A (dtl-a).